Reading from the N-terminus, the 95-residue chain is MAILMLSLQLILLLIPSISHEAHKTSLSSWKHDQDWANVSNMTFSNGKLRVKGIYYRNADICSRHRVTSAGLTLQDLQLWCNLRSVARGQIPSTL.

Residues methionine 1–serine 19 form the signal peptide. N-linked (GlcNAc...) asparagine glycosylation is found at asparagine 38 and asparagine 41.

It is found in the secreted. This is an uncharacterized protein from Homo sapiens (Human).